Reading from the N-terminus, the 624-residue chain is Chaperone protein HtpG (624 aa).

Residues 1-336 (MKTQKKEVYN…SSDLPLNISR (336 aa)) are a; substrate-binding. Residues 337–552 (EILQDNSITE…STEMTTQMAK (216 aa)) are b. The interval 553–624 (LFSAAGQSVP…ISRMNKLLIK (72 aa)) is c.

This sequence belongs to the heat shock protein 90 family. In terms of assembly, homodimer.

Its subcellular location is the cytoplasm. Functionally, molecular chaperone. Has ATPase activity. In Buchnera aphidicola subsp. Acyrthosiphon pisum (strain APS) (Acyrthosiphon pisum symbiotic bacterium), this protein is Chaperone protein HtpG.